Reading from the N-terminus, the 544-residue chain is Homeobox protein B-H1 (544 aa).

Low complexity predominate over residues 53-70; that stretch reads STTTMSSGGSTTTASGIG. Disordered stretches follow at residues 53–73, 92–179, 236–308, and 471–544; these read STTTMSSGGSTTTASGIGKPN, YKQQ…PPTA, GGVG…AFTD, and AANP…QIQV. Over residues 95–105 the composition is skewed to basic residues; that stretch reads QQHHQQLHHHN. The segment covering 106-131 has biased composition (low complexity); the sequence is NNNNSGSSGGSSPAHSNNNNNINGDN. Residues 156–172 show a composition bias toward basic residues; sequence THPHTHPHALMHPHGKL. The segment covering 247–262 has biased composition (acidic residues); that stretch reads DLDDSSDYHEENEDCD. The segment covering 266–282 has biased composition (basic and acidic residues); the sequence is MDDHSVCSNGGKDDDGN. Residues 283–293 are compositionally biased toward polar residues; the sequence is SVKSGSTSDMS. The homeobox DNA-binding region spans 299–358; it reads QRKARTAFTDHQLQTLEKSFERQKYLSVQERQELAHKLDLSDCQVKTWYQNRRTKWKRQT. Positions 476–485 are enriched in pro residues; sequence GPHPVAPPPS. The segment covering 492-506 has biased composition (low complexity); sequence PSGLVKPIPAHSASA. Positions 507 to 516 are enriched in pro residues; that stretch reads SPPPRPPSTP.

The protein belongs to the Antp homeobox family. As to expression, B-H1 and B-H2 are abundant in the eye-antenna imaginal disk. Expressed in R1 and R6 cells throughout larval stage until 30 hours after puparium formation, at which time expression is seen in the anterior and posterior primary pigment cells. Coexpressed in embryonic glial cells, neurons of the CNS and PNS, most latitudinal anterior cells of the developing notum and the central circular region of the leg and antennal imaginal disk throughout larval development.

It is found in the nucleus. In terms of biological role, B-H1 and B-H2 are regulated by members of the wg signaling pathway; wg and dpp. B-H1 and B-H2 are coexpressed and functionally required in R1 and R6 receptor cells and primary pigment cells for normal eye development. Coexpression is also required for the fate determination of external sensory organs, formation of notal microchaetae, formation of presutural macrochaetae, antennal development and for distal leg morphogenesis; segmentation and specification of tarsal segments 3-5. The protein is Homeobox protein B-H1 (B-H1) of Drosophila melanogaster (Fruit fly).